A 682-amino-acid chain; its full sequence is Probable methyltransferase PMT12 (682 aa).

Residues 1-11 (MKLFLNSNLLR) lie on the Cytoplasmic side of the membrane. The helical; Signal-anchor for type II membrane protein transmembrane segment at 12 to 32 (NSIFFKISAFVLISVACFFLG) threads the bilayer. Residues 33 to 682 (KHWSEDGFRR…KRRKTKGKRA (650 aa)) lie on the Lumenal side of the membrane. N-linked (GlcNAc...) asparagine glycosylation is found at Asn-67, Asn-103, Asn-125, Asn-155, Asn-173, Asn-193, Asn-273, Asn-350, Asn-395, Asn-419, Asn-600, and Asn-625.

It belongs to the methyltransferase superfamily.

Its subcellular location is the golgi apparatus membrane. This Arabidopsis thaliana (Mouse-ear cress) protein is Probable methyltransferase PMT12.